The chain runs to 489 residues: MKTLIFFWNLWLWALLVCFWCITLVCVTTNSIDTMASLLVMCILFVSAINKYTQAISSNNPKWPSSWHLGIIACIVLKLWNLSTTNSVTYACLITTAILSLVTAFLTLIKHCTACKLQLEHGILFTSTFAVLMTNMLVHMSNTWQSSWIFFPISFTLSLPFLYAFATVKTGNIKLVSSVSFICAGLVMGYPVSCCKTHTCTATAAGLSLSSIYLGFTGIISTLHKSWAPPKRGILTFLLLQGGVLTTQTLTTELLAITSTTGNIKGHEILLLVCLIFLWCLYVWQSFNKASLVTGMLHLIAAWSHTGGCVQLVMLLPSGLTRGILTMIICISTLFSTLQGLLVFYLYKEKKVVAVNSYRQRRRRIYTRDQNLHHNDNHLGNNVISPPPLPPFFRQPVRLPSHVTDRGRGSQLLNEVELQEVNRDPPNVFGYASILVSGAEESREPSPQPDQSGMSILRVDGGSAFRIDTAQAATQPTDDLYEEVLFPRN.

A signal peptide spans 1-26 (MKTLIFFWNLWLWALLVCFWCITLVC). 11 helical membrane passes run 29 to 49 (TNSI…VSAI), 63 to 83 (WPSS…WNLS), 89 to 109 (TYAC…LTLI), 121 to 141 (HGIL…VHMS), 148 to 168 (WIFF…FATV), 175 to 195 (LVSS…VSCC), 200 to 220 (CTAT…TGII), 237 to 257 (FLLL…LLAI), 264 to 284 (IKGH…LYVW), 296 to 316 (MLHL…VMLL), and 324 to 344 (ILTM…LLVF).

In terms of assembly, interacts with host LYN; this interaction modulates B-cells signaling. Interacts with host ITSN2.

Its subcellular location is the host cell membrane. It localises to the host Golgi apparatus. The protein localises to the host trans-Golgi network. Functionally, plays a crucial role for reactivation of the virus from latency, early viral gene expression and virus production. Modulates host signaling pathways including activation of MAP kinases c-JUN-N-terminal kinase (JNK), ERK2, and NF-kappa-B resulting in the activation of AP-1 and NFAT-dependent gene expression in B-lymphocytes. When expressed in epithelial cells, induces the expression of several inflammatory and angiogenic genes. Also interferes with B-lymphocytes signaling through interaction with host LYN kinase. This Human herpesvirus 8 type P (isolate GK18) (HHV-8) protein is Protein K15 (K15).